The primary structure comprises 271 residues: Membrane protein insertase YidC 1 (271 aa).

An N-terminal signal peptide occupies residues 1–20; it reads MKKKLKTFSLILLTGSLLVA. Cys-21 carries the N-palmitoyl cysteine lipid modification. Cys-21 carries the S-diacylglycerol cysteine lipid modification. A run of 4 helical transmembrane segments spans residues 45–65, 124–144, 163–183, and 201–221; these read IQWL…TLII, YASV…FQAL, PDPY…STWL, and VMPF…VLYW.

The protein belongs to the OXA1/ALB3/YidC family. Type 2 subfamily.

It is found in the cell membrane. Required for the insertion and/or proper folding and/or complex formation of integral membrane proteins into the membrane. Involved in integration of membrane proteins that insert both dependently and independently of the Sec translocase complex, as well as at least some lipoproteins. The protein is Membrane protein insertase YidC 1 of Streptococcus agalactiae serotype V (strain ATCC BAA-611 / 2603 V/R).